The following is a 73-amino-acid chain: Protein SlyX homolog (73 aa).

Belongs to the SlyX family.

In Histophilus somni (strain 129Pt) (Haemophilus somnus), this protein is Protein SlyX homolog.